A 304-amino-acid chain; its full sequence is Energy-coupling factor transporter ATP-binding protein EcfA2 (304 aa).

One can recognise an ABC transporter domain in the interval 3–261 (IIVKNISYIY…EKFLVENKLK (259 aa)). 40–47 (GSTGSGKT) serves as a coordination point for ATP.

It belongs to the ABC transporter superfamily. Energy-coupling factor EcfA family. In terms of assembly, forms a stable energy-coupling factor (ECF) transporter complex composed of 2 membrane-embedded substrate-binding proteins (S component), 2 ATP-binding proteins (A component) and 2 transmembrane proteins (T component).

It is found in the cell membrane. Its function is as follows. ATP-binding (A) component of a common energy-coupling factor (ECF) ABC-transporter complex. Unlike classic ABC transporters this ECF transporter provides the energy necessary to transport a number of different substrates. The sequence is that of Energy-coupling factor transporter ATP-binding protein EcfA2 from Mycoplasmopsis pulmonis (strain UAB CTIP) (Mycoplasma pulmonis).